Here is a 653-residue protein sequence, read N- to C-terminus: Threonine--tRNA ligase (653 aa).

Residues 1 to 61 (MIKITFPDGN…NEDAEVKLFK (61 aa)) form the TGS domain. A catalytic region spans residues 243–542 (DHRKIGKELE…LIEHTAGKFP (300 aa)). 3 residues coordinate Zn(2+): Cys338, His389, and His519.

Belongs to the class-II aminoacyl-tRNA synthetase family. Homodimer. It depends on Zn(2+) as a cofactor.

The protein localises to the cytoplasm. It carries out the reaction tRNA(Thr) + L-threonine + ATP = L-threonyl-tRNA(Thr) + AMP + diphosphate + H(+). Catalyzes the attachment of threonine to tRNA(Thr) in a two-step reaction: L-threonine is first activated by ATP to form Thr-AMP and then transferred to the acceptor end of tRNA(Thr). Also edits incorrectly charged L-seryl-tRNA(Thr). The protein is Threonine--tRNA ligase of Porphyromonas gingivalis (strain ATCC BAA-308 / W83).